We begin with the raw amino-acid sequence, 186 residues long: UPF0301 protein NTHI0415 (186 aa).

Belongs to the UPF0301 (AlgH) family.

The polypeptide is UPF0301 protein NTHI0415 (Haemophilus influenzae (strain 86-028NP)).